We begin with the raw amino-acid sequence, 997 residues long: FIP1[III]-like protein (997 aa).

Disordered regions lie at residues 250–272 (ITSNEASRSDVSHSYGSKDLNSV), 289–475 (AGSF…ETEG), 534–553 (SRSSFDLNQRNSRSSFKEED), and 880–900 (QGKVSNQSKKRFSNGGDTIEQ). Positions 261-272 (SHSYGSKDLNSV) are enriched in polar residues. Composition is skewed to basic and acidic residues over residues 309–323 (TPSDKEMLEKEKEES), 334–346 (SVERESSLGDRIR), 367–379 (ESLKDSATDDQRE), and 388–404 (RLAEHEAISIKRGEDSG). The short motif at 397-404 (IKRGEDSG) is the Nuclear localization signal element. The segment covering 534–547 (SRSSFDLNQRNSRS) has biased composition (polar residues). Positions 930–963 (EIIEEVKGVEIDNERIQESLKKMEKRRERFKGTK) form a coiled coil.

Belongs to the FIP1 family. Component of the cleavage and polyadenylation specificity factor (CPSF) complex. Forms a complex with cleavage and polyadenylation specificity factor (CPSF) subunits CLPS5, FIPS5, PAPS4, PCFS1, CSTF64 and CPSF30.

It is found in the nucleus. Its function is as follows. Component of the cleavage and polyadenylation specificity factor (CPSF) complex that plays a key role in pre-mRNA 3'-end formation, recognizing the AAUAAA signal sequence and interacting with poly(A) polymerase and other factors to bring about cleavage and poly(A) addition. FIP1L1 contributes to poly(A) site recognition and stimulates poly(A) addition. Binds to U-rich RNA sequence elements surrounding the poly(A) site. May act to tether poly(A) polymerase to the CPSF complex. This Arabidopsis thaliana (Mouse-ear cress) protein is FIP1[III]-like protein.